The chain runs to 138 residues: Thyrotropin subunit beta (138 aa).

The signal sequence occupies residues 1 to 20; sequence MSAAVLLSVLFALACGQAAS. Intrachain disulfides connect C22-C72, C36-C87, C39-C125, C47-C103, C51-C105, and C108-C115. N-linked (GlcNAc...) asparagine glycosylation is present at N43. Residues 133–138 constitute a propeptide that is removed on maturation; it reads LGGFSV.

This sequence belongs to the glycoprotein hormones subunit beta family. In terms of assembly, heterodimer of a common alpha chain and a unique beta chain which confers biological specificity to thyrotropin, lutropin, follitropin and gonadotropin.

It localises to the secreted. In terms of biological role, indispensable for the control of thyroid structure and metabolism. The protein is Thyrotropin subunit beta (Tshb) of Mus musculus (Mouse).